Reading from the N-terminus, the 289-residue chain is Oxaloacetate decarboxylase (289 aa).

Residue Ser-50 coordinates substrate. Asp-88 serves as a coordination point for Mg(2+). Residues Arg-159 and His-235 each coordinate substrate.

Belongs to the isocitrate lyase/PEP mutase superfamily. Oxaloacetate decarboxylase family. As to quaternary structure, homotetramer; dimer of dimers. Requires Mg(2+) as cofactor.

It carries out the reaction oxaloacetate + H(+) = pyruvate + CO2. In terms of biological role, catalyzes the decarboxylation of oxaloacetate into pyruvate. Seems to play a role in maintaining cellular concentrations of bicarbonate and pyruvate. This is Oxaloacetate decarboxylase from Pseudomonas fluorescens (strain ATCC BAA-477 / NRRL B-23932 / Pf-5).